The chain runs to 121 residues: Chromosome transmission fidelity protein 8 homolog (121 aa).

Belongs to the CTF8 family. As to quaternary structure, component of the CTF18-RFC complex, which consists of CTF18, CTF8, DSCC1, RFC2, RFC3, RFC4 and RFC5. The CTF18-RFC complex does not interact with the Rad9/Rad1/Hus1 complex. The CTF18-RFC complex interacts with POLH. CTF18/CTF8/DSCC1 associate with PCNA. CTF8 exists as a dimer with DSCC1.

Its subcellular location is the nucleus. Chromosome cohesion factor involved in sister chromatid cohesion and fidelity of chromosome transmission. Component of one of the cell nuclear antigen loader complexes, CTF18-replication factor C (CTF18-RFC), which consists of CTF18, CTF8, DSCC1, RFC2, RFC3, RFC4 and RFC5. The CTF18-RFC complex binds to single-stranded and primed DNAs and has weak ATPase activity that is stimulated the presence of primed DNA, replication protein A (RPA) and proliferating cell nuclear antigen (PCNA). The CTF18-RFC complex catalyzes the ATP-dependent loading of PCNA onto primed and gapped DNA. It also interacts with and stimulates POLH, which is suggestive of a protein network that coordinates DNA repair, recombination and chromosome cohesion reactions with replication fork progression. The sequence is that of Chromosome transmission fidelity protein 8 homolog from Rattus norvegicus (Rat).